A 417-amino-acid chain; its full sequence is Serine hydroxymethyltransferase 1 (417 aa).

Residues L121 and 125–127 (GHL) each bind (6S)-5,6,7,8-tetrahydrofolate. N6-(pyridoxal phosphate)lysine is present on K230. 355–357 (SPF) lines the (6S)-5,6,7,8-tetrahydrofolate pocket.

Belongs to the SHMT family. As to quaternary structure, homodimer. Pyridoxal 5'-phosphate serves as cofactor.

The protein localises to the cytoplasm. It carries out the reaction (6R)-5,10-methylene-5,6,7,8-tetrahydrofolate + glycine + H2O = (6S)-5,6,7,8-tetrahydrofolate + L-serine. Its pathway is one-carbon metabolism; tetrahydrofolate interconversion. It functions in the pathway amino-acid biosynthesis; glycine biosynthesis; glycine from L-serine: step 1/1. Functionally, catalyzes the reversible interconversion of serine and glycine with tetrahydrofolate (THF) serving as the one-carbon carrier. This reaction serves as the major source of one-carbon groups required for the biosynthesis of purines, thymidylate, methionine, and other important biomolecules. Also exhibits THF-independent aldolase activity toward beta-hydroxyamino acids, producing glycine and aldehydes, via a retro-aldol mechanism. This chain is Serine hydroxymethyltransferase 1, found in Pseudomonas aeruginosa (strain ATCC 15692 / DSM 22644 / CIP 104116 / JCM 14847 / LMG 12228 / 1C / PRS 101 / PAO1).